The following is a 157-amino-acid chain: Phosphopantetheine adenylyltransferase (157 aa).

Residue threonine 8 coordinates substrate. ATP-binding positions include 8-9 (TF) and histidine 16. 3 residues coordinate substrate: lysine 40, threonine 72, and arginine 86. Residues 87–89 (GLR), glutamate 97, and 122–128 (YSFLSSS) each bind ATP.

It belongs to the bacterial CoaD family. In terms of assembly, homohexamer. The cofactor is Mg(2+).

The protein resides in the cytoplasm. The enzyme catalyses (R)-4'-phosphopantetheine + ATP + H(+) = 3'-dephospho-CoA + diphosphate. It participates in cofactor biosynthesis; coenzyme A biosynthesis; CoA from (R)-pantothenate: step 4/5. Reversibly transfers an adenylyl group from ATP to 4'-phosphopantetheine, yielding dephospho-CoA (dPCoA) and pyrophosphate. This is Phosphopantetheine adenylyltransferase from Prochlorococcus marinus (strain MIT 9215).